Reading from the N-terminus, the 493-residue chain is Growth-regulating factor 8 (493 aa).

The 36-residue stretch at 149–184 (AFSEAQWHELERQRNIYKYMMASVPVPPELLTPFPK) folds into the QLQ domain. The 45-residue stretch at 243-287 (DLEPWRCKRTDGKKWRCSRNVIPDQKYCERHTHKSRPRSRKHVES) folds into the WRC domain. 2 short sequence motifs (bipartite nuclear localization signal) span residues 248-258 (RCKRTDGKKWR) and 276-283 (KSRPRSRK). A disordered region spans residues 270–302 (CERHTHKSRPRSRKHVESSHQSSHHNDIRTAKN). The segment covering 273 to 283 (HTHKSRPRSRK) has biased composition (basic residues).

Belongs to the GRF family. Predominantly expressed in shoot tips and flowers.

Its subcellular location is the nucleus. Transcription activator that plays a role in the regulation of cell expansion in leaf and cotyledons tissues. Component of a network formed by miR396, the GRFs and their interacting factors (GIFs) acting in the regulation of meristem function, at least partially through the control of cell proliferation. This is Growth-regulating factor 8 (GRF8) from Arabidopsis thaliana (Mouse-ear cress).